A 129-amino-acid polypeptide reads, in one-letter code: MEKYQSKARFAPLSDAPFALRGALGSSNSSFNNIDHLRQSSSSGQARSYTSSPLGALRPKMFPSGNRLLHTSRPLSAPVANRPLSPHLPLKKPQLSATFSISHRIFGAALGAVIISIPLATKFSLMFDV.

A mitochondrion-targeting transit peptide spans 1-58 (MEKYQSKARFAPLSDAPFALRGALGSSNSSFNNIDHLRQSSSSGQARSYTSSPLGALR). Polar residues predominate over residues 27–53 (SNSSFNNIDHLRQSSSSGQARSYTSSP). A disordered region spans residues 27-66 (SNSSFNNIDHLRQSSSSGQARSYTSSPLGALRPKMFPSGN). Position 87 (His87) interacts with heme. Residues 105-127 (IFGAALGAVIISIPLATKFSLMF) form a helical membrane-spanning segment.

As to quaternary structure, component of complex II composed of eight subunits in plants: four classical SDH subunits SDH1, SDH2, SDH3 and SDH4 (a flavoprotein (FP), an iron-sulfur protein (IP), and a cytochrome b composed of a large and a small subunit.), as well as four subunits unknown in mitochondria from bacteria and heterotrophic eukaryotes. Requires heme as cofactor.

The protein localises to the mitochondrion inner membrane. The protein operates within carbohydrate metabolism; tricarboxylic acid cycle. Functionally, membrane-anchoring subunit of succinate dehydrogenase (SDH). This Oryza sativa subsp. japonica (Rice) protein is Succinate dehydrogenase subunit 3-2, mitochondrial.